Consider the following 103-residue polypeptide: MVVKKSKPKNQIRVEDLDLPKLNTSKNPQTKIQKKGKKKGKIFAETKDDLQNILNQVTYELDDKIKSKLQVAHEREAVFSKQSDRKISNNKADKKTGRKNEKK.

Basic residues predominate over residues 1–10 (MVVKKSKPKN). 2 disordered regions span residues 1-38 (MVVKKSKPKNQIRVEDLDLPKLNTSKNPQTKIQKKGKK) and 77-103 (AVFSKQSDRKISNNKADKKTGRKNEKK).

This is an uncharacterized protein from Schizosaccharomyces pombe (strain 972 / ATCC 24843) (Fission yeast).